The chain runs to 198 residues: Nucleoside triphosphate pyrophosphatase 1 (198 aa).

Residue Asp-75 is the Proton acceptor of the active site.

This sequence belongs to the Maf family. Requires a divalent metal cation as cofactor.

The protein resides in the cytoplasm. The enzyme catalyses a ribonucleoside 5'-triphosphate + H2O = a ribonucleoside 5'-phosphate + diphosphate + H(+). It carries out the reaction a 2'-deoxyribonucleoside 5'-triphosphate + H2O = a 2'-deoxyribonucleoside 5'-phosphate + diphosphate + H(+). Its function is as follows. Nucleoside triphosphate pyrophosphatase. May have a dual role in cell division arrest and in preventing the incorporation of modified nucleotides into cellular nucleic acids. This Jannaschia sp. (strain CCS1) protein is Nucleoside triphosphate pyrophosphatase 1.